A 704-amino-acid polypeptide reads, in one-letter code: CAP-Gly domain-containing linker protein 4 (704 aa).

3 ANK repeats span residues 65–101, 149–180, and 186–215; these read TSVS…NVND, TNMN…DVDA, and NFGT…NPAF. The CAP-Gly 1 domain maps to 303–345; the sequence is GTTEFASGQWAGIELDEPEGKNNGSVGRVQYFKCAPKYGIFAP. The segment at 353 to 479 is disordered; it reads KDGRKTTTHT…SATSAANNSH (127 aa). Low complexity-rich tracts occupy residues 360-371, 423-432, and 440-461; these read THTPSTRATPHA, SMSSSSSSSS, and PKKL…SLPS. One can recognise a CAP-Gly 2 domain in the interval 504 to 546; the sequence is GTTNFAPGYWYGIELEKPHGKNDGSVGGVQYFSCSPRYGIFAP. Ser556 and Ser608 each carry phosphoserine. The 43-residue stretch at 643–685 folds into the CAP-Gly 3 domain; the sequence is GPTDFASGIWLGLELRSAKGKNDGAVGDKRYFTCKPNYGVLVR.

In Mus musculus (Mouse), this protein is CAP-Gly domain-containing linker protein 4 (Clip4).